The primary structure comprises 460 residues: Putative E3 ubiquitin-protein ligase RING1b (460 aa).

A disordered region spans residues 1 to 85 (MPSLKSFSAA…SQSSSAGELS (85 aa)). Residues 21-31 (SEAERFNPEAV) show a composition bias toward basic and acidic residues. 2 stretches are compositionally biased toward acidic residues: residues 32-51 (EKEE…DEED) and 59-71 (EAED…EEED). An RING-type zinc finger spans residues 103–143 (CSICLGIIRKTRTVMECLHRFCRECIDKSMRLGNNECPTCR). Residues 196–300 (QVSQRQSKAL…TEQTHQRDSR (105 aa)) are disordered. Residues 220-234 (RSRRSGGGSRRRRNC) show a composition bias toward basic residues. A compositionally biased stretch (acidic residues) spans 240–249 (DTSEANDDDD). Basic and acidic residues predominate over residues 250–265 (QNKRGKDSSSDEPCER). Residues 276–290 (SSSNANNNDNCAGNG) show a composition bias toward low complexity.

In terms of assembly, heterodimer with RING1A. Interacts with CLF. Component of the PRC1-like complex, at least composed of RING1A, RING1B and LHP1.

The protein localises to the nucleus. It catalyses the reaction S-ubiquitinyl-[E2 ubiquitin-conjugating enzyme]-L-cysteine + [acceptor protein]-L-lysine = [E2 ubiquitin-conjugating enzyme]-L-cysteine + N(6)-ubiquitinyl-[acceptor protein]-L-lysine.. The protein operates within protein modification; protein ubiquitination. Functionally, putative E3 ubiquitin-protein ligase that mediates monoubiquitination of 'Lys-119' of histone H2A (H2AK119ub), thereby playing a central role in histone code and gene regulation. As part of the PRC1-like complex, repress class I KNOX gene expression. PcG PRC1 complex maintains the transcriptionally repressive state of many genes, including Hox genes, throughout development. PcG PRC1 complex acts via chromatin remodeling and modification of histones, rendering chromatin heritably changed in its expressibility. This is Putative E3 ubiquitin-protein ligase RING1b (RING1B) from Arabidopsis thaliana (Mouse-ear cress).